Reading from the N-terminus, the 357-residue chain is Red-sensitive opsin (357 aa).

Over 1–49 (MGDQWGDAVFAARRRGDDTTREAAFTYTNSNNTKDPFEGPNYHIAPRWV) the chain is Extracellular. Asn31 is a glycosylation site (N-linked (GlcNAc...) asparagine). Residues 50-74 (YNLATCWMFFVVVASTVTNGLVLVA) traverse the membrane as a helical segment. Over 75 to 86 (SAKFKKLRHPLN) the chain is Cytoplasmic. The helical transmembrane segment at 87–112 (WILVNLAIADLLETLLASTISVCNQF) threads the bilayer. Residues 113–126 (FGYFILGHPMCVFE) lie on the Extracellular side of the membrane. The cysteines at positions 123 and 200 are disulfide-linked. The chain crosses the membrane as a helical span at residues 127–146 (GFTVATCGIAGLWSLTVISW). At 147 to 165 (ERWVVVCKPFGNVKFDGKM) the chain is on the cytoplasmic side. A helical membrane pass occupies residues 166 to 189 (ATAGIVFTWVWSAVWCAPPIFGWS). Residues 190 to 215 (RYWPHGLKTSCGPDVFSGSEDPGVQS) lie on the Extracellular side of the membrane. The helical transmembrane segment at 216–243 (YMIVLMITCCFIPLGIIILCYIAVWWAI) threads the bilayer. Topologically, residues 244–265 (RTVAQQQKDSESTQKAEKEVSR) are cytoplasmic. The chain crosses the membrane as a helical span at residues 266-289 (MVVVMIMAYCFCWGPYTFFACFAA). Topologically, residues 290 to 297 (ANPGYAFH) are extracellular. Residues 298-322 (PLAAAMPAYFAKSATIYNPVIYVFM) traverse the membrane as a helical segment. Position 309 is an N6-(retinylidene)lysine (Lys309). Residues 323 to 357 (NRQFRVCIMQLFGKKVDDGSEVSTSKTEVSSVAPA) lie on the Cytoplasmic side of the membrane.

It belongs to the G-protein coupled receptor 1 family. Opsin subfamily. Phosphorylated on some or all of the serine and threonine residues present in the C-terminal region. The color pigments are found in the cone photoreceptor cells.

It is found in the membrane. In terms of biological role, visual pigments are the light-absorbing molecules that mediate vision. They consist of an apoprotein, opsin, covalently linked to cis-retinal. The protein is Red-sensitive opsin (R007) of Psalidodon fasciatus (Banded astyanax).